Reading from the N-terminus, the 885-residue chain is GPI ethanolamine phosphate transferase 2 (885 aa).

Residues asparagine 82, asparagine 155, and asparagine 194 are each glycosylated (N-linked (GlcNAc...) asparagine). Residues 413–433 traverse the membrane as a helical segment; the sequence is DIYAGALILVITALAVIVVFN. A glycan (N-linked (GlcNAc...) asparagine) is linked at asparagine 443. Transmembrane regions (helical) follow at residues 447 to 467, 473 to 493, and 495 to 514; these read VMFYELFVVLYSLHFHGSSLI, IWYFFTTATLLFLAITFFDTF, and SLQNFISFGVLFACIRFMRS. Asparagine 516 carries N-linked (GlcNAc...) asparagine glycosylation. A run of 8 helical transmembrane segments spans residues 539–559, 581–601, 648–668, 697–717, 726–746, 768–788, 820–840, and 865–885; these read LMWGLIILTYFVLTLCIYIQG, GLISFIVVFVATSVSFSFKLL, IQLSKFTTIILLLLVISRVII, ENIPIFLALMFAKFALSKLIY, YILTVTMTVLCLQNLTFFCMG, VFLVGLLTFVSNFAGPIFWSL, ILLVKSLISLFFYTVSAVNLV, and SWILFVNVLIDLILAVIVLLF.

The protein belongs to the PIGG/PIGN/PIGO family. PIGG subfamily.

It localises to the endoplasmic reticulum membrane. It functions in the pathway glycolipid biosynthesis; glycosylphosphatidylinositol-anchor biosynthesis. Its function is as follows. Ethanolamine phosphate transferase involved in glycosylphosphatidylinositol-anchor biosynthesis. Transfers ethanolamine phosphate to the GPI second mannose. The sequence is that of GPI ethanolamine phosphate transferase 2 (GPI7) from Candida albicans (strain SC5314 / ATCC MYA-2876) (Yeast).